The primary structure comprises 116 residues: Large ribosomal subunit protein bL19 (116 aa).

The protein belongs to the bacterial ribosomal protein bL19 family.

This protein is located at the 30S-50S ribosomal subunit interface and may play a role in the structure and function of the aminoacyl-tRNA binding site. The sequence is that of Large ribosomal subunit protein bL19 from Solidesulfovibrio magneticus (strain ATCC 700980 / DSM 13731 / RS-1) (Desulfovibrio magneticus).